An 823-amino-acid chain; its full sequence is Ankyrin repeat domain-containing protein 20A1 (823 aa).

ANK repeat units lie at residues 66–95, 99–128, 132–161, 165–194, and 198–227; these read QHRT…QIDV, ENRT…NPNL, YGNT…HIEA, DNNT…SSHA, and LRRS…DVFA. Disordered regions lie at residues 301 to 343 and 355 to 402; these read VPEK…EVED and VQTL…LSEN. Positions 372–384 are enriched in basic and acidic residues; it reads QERHERSEKKQPQ. Coiled-coil stretches lie at residues 431–480, 565–724, and 776–805; these read KKLK…KQLE, EMIT…NNST, and LVLE…EKTE.

The chain is Ankyrin repeat domain-containing protein 20A1 (ANKRD20A1) from Homo sapiens (Human).